The following is an 896-amino-acid chain: Valine--tRNA ligase (896 aa).

The 'HIGH' region motif lies at 48 to 58 (PNVTGSLHMGH). Residues 543-547 (KMSKS) carry the 'KMSKS' region motif. K546 serves as a coordination point for ATP. Residues 830–896 (VIDLDAERTR…ARLGAALERL (67 aa)) are a coiled coil.

The protein belongs to the class-I aminoacyl-tRNA synthetase family. ValS type 1 subfamily. In terms of assembly, monomer.

The protein resides in the cytoplasm. It carries out the reaction tRNA(Val) + L-valine + ATP = L-valyl-tRNA(Val) + AMP + diphosphate. In terms of biological role, catalyzes the attachment of valine to tRNA(Val). As ValRS can inadvertently accommodate and process structurally similar amino acids such as threonine, to avoid such errors, it has a 'posttransfer' editing activity that hydrolyzes mischarged Thr-tRNA(Val) in a tRNA-dependent manner. The chain is Valine--tRNA ligase from Granulibacter bethesdensis (strain ATCC BAA-1260 / CGDNIH1).